Consider the following 606-residue polypeptide: NADH-ubiquinone oxidoreductase chain 5 (606 aa).

16 helical membrane passes run 1 to 21 (MNLF…PIIM), 43 to 63 (AFII…EAII), 88 to 108 (IFIP…MWYM), 117 to 137 (FFKY…ANNL), 140 to 160 (LFIG…WWYG), 171 to 191 (AILY…WFLT), 209 to 229 (LNIP…QFGL), 241 to 261 (TPVS…FLLI), 273 to 293 (MQTL…ICAL), 310 to 330 (LGLM…LHIC), 366 to 386 (MPFT…MPFL), 413 to 433 (LIAT…VLLG), 457 to 477 (LLIG…PTTI), 488 to 508 (LTAL…NLAA), 513 to 533 (FMYP…PIVM), and 582 to 602 (GLVK…LILL).

It belongs to the complex I subunit 5 family. In terms of assembly, core subunit of respiratory chain NADH dehydrogenase (Complex I) which is composed of 45 different subunits.

The protein resides in the mitochondrion inner membrane. The enzyme catalyses a ubiquinone + NADH + 5 H(+)(in) = a ubiquinol + NAD(+) + 4 H(+)(out). Its function is as follows. Core subunit of the mitochondrial membrane respiratory chain NADH dehydrogenase (Complex I) which catalyzes electron transfer from NADH through the respiratory chain, using ubiquinone as an electron acceptor. Essential for the catalytic activity and assembly of complex I. The chain is NADH-ubiquinone oxidoreductase chain 5 (MT-ND5) from Felis catus (Cat).